The chain runs to 217 residues: Non-structural protein NS3 (217 aa).

This sequence belongs to the orbivirus NS3 family.

May play a role in the release of virions from infected cells. This Camelus dromedarius (Dromedary) protein is Non-structural protein NS3 (Segment-10).